The chain runs to 119 residues: Small ribosomal subunit protein uS13m (119 aa).

The protein belongs to the universal ribosomal protein uS13 family. As to quaternary structure, part of the small ribosomal subunit.

Its subcellular location is the mitochondrion. Its function is as follows. Located at the top of the head of the small subunit, it contacts several helices of the small subunit rRNA. In Prototheca wickerhamii, this protein is Small ribosomal subunit protein uS13m (RPS13).